A 192-amino-acid polypeptide reads, in one-letter code: Orotate phosphoribosyltransferase (192 aa).

5-phospho-alpha-D-ribose 1-diphosphate-binding positions include R102, K103, K106, and 129–137 (EDVVTTGRS). Orotate contacts are provided by T133 and R161.

Belongs to the purine/pyrimidine phosphoribosyltransferase family. PyrE subfamily. In terms of assembly, homodimer. It depends on Mg(2+) as a cofactor.

It carries out the reaction orotidine 5'-phosphate + diphosphate = orotate + 5-phospho-alpha-D-ribose 1-diphosphate. The protein operates within pyrimidine metabolism; UMP biosynthesis via de novo pathway; UMP from orotate: step 1/2. In terms of biological role, catalyzes the transfer of a ribosyl phosphate group from 5-phosphoribose 1-diphosphate to orotate, leading to the formation of orotidine monophosphate (OMP). This chain is Orotate phosphoribosyltransferase, found in Prochlorococcus marinus (strain SARG / CCMP1375 / SS120).